The primary structure comprises 68 residues: Large ribosomal subunit protein uL29c (68 aa).

Belongs to the universal ribosomal protein uL29 family.

It localises to the plastid. The protein localises to the chloroplast. This chain is Large ribosomal subunit protein uL29c, found in Pyropia yezoensis (Susabi-nori).